Consider the following 342-residue polypeptide: Ketol-acid reductoisomerase (NADP(+)) (342 aa).

The KARI N-terminal Rossmann domain maps to 2–181 (VKVYYNGDIK…GGARAGVLET (180 aa)). NADP(+) is bound by residues 25–28 (YGSQ), R48, S52, and 82–85 (DEQQ). The active site involves H107. G133 provides a ligand contact to NADP(+). A KARI C-terminal knotted domain is found at 182–327 (TFKEETETDL…RKLREMMPFV (146 aa)). 4 residues coordinate Mg(2+): D190, E194, E226, and E230. S251 is a binding site for substrate.

It belongs to the ketol-acid reductoisomerase family. It depends on Mg(2+) as a cofactor.

It catalyses the reaction (2R)-2,3-dihydroxy-3-methylbutanoate + NADP(+) = (2S)-2-acetolactate + NADPH + H(+). The catalysed reaction is (2R,3R)-2,3-dihydroxy-3-methylpentanoate + NADP(+) = (S)-2-ethyl-2-hydroxy-3-oxobutanoate + NADPH + H(+). The protein operates within amino-acid biosynthesis; L-isoleucine biosynthesis; L-isoleucine from 2-oxobutanoate: step 2/4. It participates in amino-acid biosynthesis; L-valine biosynthesis; L-valine from pyruvate: step 2/4. Functionally, involved in the biosynthesis of branched-chain amino acids (BCAA). Catalyzes an alkyl-migration followed by a ketol-acid reduction of (S)-2-acetolactate (S2AL) to yield (R)-2,3-dihydroxy-isovalerate. In the isomerase reaction, S2AL is rearranged via a Mg-dependent methyl migration to produce 3-hydroxy-3-methyl-2-ketobutyrate (HMKB). In the reductase reaction, this 2-ketoacid undergoes a metal-dependent reduction by NADPH to yield (R)-2,3-dihydroxy-isovalerate. The chain is Ketol-acid reductoisomerase (NADP(+)) from Bacillus licheniformis (strain ATCC 14580 / DSM 13 / JCM 2505 / CCUG 7422 / NBRC 12200 / NCIMB 9375 / NCTC 10341 / NRRL NRS-1264 / Gibson 46).